A 137-amino-acid polypeptide reads, in one-letter code: MAQLTVQVVTPDGIRYDHHASLITVRTPDGEMGILPGHINLIAPLNVHQMKINRSHQEGVDWVAVNGGIIEVNEDQVTIVADSAERARDIDLNRAERAKERAERALEKAQTTQNIDEMRRAEVALRRAINRISVGKK.

The protein belongs to the ATPase epsilon chain family. F-type ATPases have 2 components, CF(1) - the catalytic core - and CF(0) - the membrane proton channel. CF(1) has five subunits: alpha(3), beta(3), gamma(1), delta(1), epsilon(1). CF(0) has three main subunits: a, b and c.

The protein localises to the cell membrane. Its function is as follows. Produces ATP from ADP in the presence of a proton gradient across the membrane. The sequence is that of ATP synthase epsilon chain from Streptococcus agalactiae serotype Ia (strain ATCC 27591 / A909 / CDC SS700).